The following is a 570-amino-acid chain: NADPH oxidase 2 (570 aa).

Topologically, residues 2–9 (GNWAVNEG) are cytoplasmic. A helical transmembrane segment spans residues 10–36 (LSIFVILVWLGLNVFLFVWYYRVYDIP). Over 37-46 (PKFFYTRKLL) the chain is Extracellular. The chain crosses the membrane as a helical span at residues 47-72 (GSALALARAPAACLNFNCMLILLPVC). The Ferric oxidoreductase domain occupies 54–286 (RAPAACLNFN…MFLYLCERLV (233 aa)). Residues 73-95 (RNLLSFLRGSSACCSTRVRRQLD) are Cytoplasmic-facing. Residues 96-130 (RNLTFHKMVAWMIALHSAIHTIAHLFNVEWCVNAR) form a helical membrane-spanning segment. His101 and His115 together coordinate heme b. Residues 131–163 (VNNSDPYSVALSELGDRQNESYLNFARKRIKNP) are Extracellular-facing. 2 N-linked (GlcNAc...) asparagine glycosylation sites follow: Asn132 and Asn149. A Glycyl lysine isopeptide (Lys-Gly) (interchain with G-Cter in ubiquitin) cross-link involves residue Lys161. The helical transmembrane segment at 164–194 (EGGLYLAVTLLAGITGVVITLCLILIITSST) threads the bilayer. The Cytoplasmic portion of the chain corresponds to 195-203 (KTIRRSYFE). 2 residues coordinate FAD: Arg199 and Ser200. The helical transmembrane segment at 204–222 (VFWYTHHLFVIFFIGLAIH) threads the bilayer. The heme b site is built by Trp206, His209, His222, Arg226, and Ile227. The Extracellular portion of the chain corresponds to 223–267 (GAERIVRGQTAESLAVHNITVCEQKISEWGKIKECPIPQFAGNPP). Asn240 carries N-linked (GlcNAc...) asparagine glycosylation. Lys255 participates in a covalent cross-link: Glycyl lysine isopeptide (Lys-Gly) (interchain with G-Cter in ubiquitin). Residues Met268, Tyr280, and Arg287 each coordinate heme b. Residues 268–285 (MTWKWIVGPMFLYLCERL) traverse the membrane as a helical segment. The Cytoplasmic portion of the chain corresponds to 286 to 570 (VRFWRSQQKV…VHFIFNKENF (285 aa)). The FAD-binding FR-type domain occupies 287–397 (RFWRSQQKVV…DGPFGTASED (111 aa)). Glycyl lysine isopeptide (Lys-Gly) (interchain with G-Cter in ubiquitin) cross-links involve residues Lys294, Lys299, Lys306, Lys328, and Lys334. Trp337, His338, Pro339, Thr341, His354, Arg356, Trp361, and Thr362 together coordinate FAD. Lys381 is covalently cross-linked (Glycyl lysine isopeptide (Lys-Gly) (interchain with G-Cter in ubiquitin)). Residues Ile411, Arg446, and Thr481 each contribute to the NADPH site. Residue Lys506 forms a Glycyl lysine isopeptide (Lys-Gly) (interchain with G-Cter in ubiquitin) linkage. NADPH is bound at residue Arg513. Residue Lys567 forms a Glycyl lysine isopeptide (Lys-Gly) (interchain with G-Cter in ubiquitin) linkage.

Component of the phagocyte NADPH oxidase core complex/cytochrome b558 complex, composed of CYBB (heavy chain (beta)) and CYBA (light chain (alpha)). Component of the phagocyte NADPH oxidase complex composed of an obligatory core heterodimer formed by the membrane proteins CYBA and CYBB and the cytosolic regulatory subunits NCF1/p47-phox, NCF2/p67-phox, NCF4/p40-phox and the small GTPase RAC1 or RAC2. Interacts with NCF1 (phosphorylated form). Interacts with NCF2; the interaction is enhanced in the presence of GBP7. Interacts with RAC2. Interacts with RAC1. Interacts with calprotectin (S100A8/9). Interacts with NRROS; the interaction is direct and impairs formation of a stable NADPH oxidase complex. Interacts with CYBC1; CYBC1 may act as a chaperone stabilizing Cytochrome b-245 heterodimer. The CYBA-CYBB complex interacts with GBP7. FAD is required as a cofactor. Post-translationally, glycosylated. In terms of processing, phosphorylated on Ser and Thr residues by PKC during neutrophils activation. Phosphorylation enhances the NADPH oxidase activity and stimulates its interaction with RAC2, NCF2/p67-phox, and NCF1/p47-phox. Undergoes 'Lys-48'-linked polyubiquitination, likely by RNF145, triggering endoplasmic reticulum-associated degradation. Detected in neutrophils (at protein level).

The protein resides in the cell membrane. It catalyses the reaction NADPH + 2 O2 = 2 superoxide + NADP(+) + H(+). Functionally, catalytic subunit of the phagocyte NADPH oxidase complex that mediates the transfer of electrons from cytosolic NADPH to O2 to produce the superoxide anion (O2(-)). In the activated complex, electrons are first transferred from NADPH to flavin adenine dinucleotide (FAD) and subsequently transferred via two heme molecules to molecular oxygen, producing superoxide through an outer-sphere reaction. Activation of the NADPH oxidase complex is initiated by the assembly of cytosolic subunits of the NADPH oxidase complex with the core NADPH oxidase complex to form a complex at the plasma membrane or phagosomal membrane. This activation process is initiated by phosphorylation dependent binding of the cytosolic NCF1/p47-phox subunit to the C-terminus of CYBA/p22-phox. NADPH oxidase complex assembly is impaired through interaction with NRROS. The chain is NADPH oxidase 2 from Homo sapiens (Human).